We begin with the raw amino-acid sequence, 142 residues long: Small ribosomal subunit protein uS12 (142 aa).

The protein belongs to the universal ribosomal protein uS12 family. Part of the 30S ribosomal subunit.

In terms of biological role, with S4 and S5 plays an important role in translational accuracy. Located at the interface of the 30S and 50S subunits. This chain is Small ribosomal subunit protein uS12, found in Methanosarcina barkeri (strain Fusaro / DSM 804).